We begin with the raw amino-acid sequence, 129 residues long: Fluoride-specific ion channel FluC 1 (129 aa).

A run of 3 helical transmembrane segments spans residues 43–63 (ASLLLGLVAGAAGAGAPPAWV), 68–88 (VVSLVGTGLCGALSTYSTFSY), and 100–120 (LLAAANVAGSVLAAFGAAALG). Na(+) is bound by residues G78 and S81.

It belongs to the fluoride channel Fluc/FEX (TC 1.A.43) family.

The protein localises to the cell membrane. It carries out the reaction fluoride(in) = fluoride(out). Its activity is regulated as follows. Na(+) is not transported, but it plays an essential structural role and its presence is essential for fluoride channel function. In terms of biological role, fluoride-specific ion channel. Important for reducing fluoride concentration in the cell, thus reducing its toxicity. The chain is Fluoride-specific ion channel FluC 1 from Frankia casuarinae (strain DSM 45818 / CECT 9043 / HFP020203 / CcI3).